Here is a 560-residue protein sequence, read N- to C-terminus: DNA-directed primase/polymerase protein (560 aa).

A coiled-coil region spans residues 1 to 22 (MNRKWEAKLKQIEERASHYERK). Residues Arg76, 114–116 (DLE), and 165–169 (KFSRH) each bind substrate. 2 residues coordinate Mn(2+): Asp114 and Glu116. Residues 203 to 223 (EDDDSAPETTGHGFPHFSEAP) are disordered. At Ser255 the chain carries Phosphoserine. Substrate-binding positions include 288–291 (RNFR) and Lys297. 4 residues coordinate Zn(2+): Cys419, His426, Cys446, and Cys451. The Zinc knuckle motif motif lies at 419-452 (CENIGRAHKSNNIMILVDLKNEVWYQKCHDPVCK). A disordered region spans residues 480–507 (TTDEADETRSNETQNPHKPSPSRLSTGA). Residues 481-560 (TDEADETRSN…DELIIEVLQE (80 aa)) are interaction with RPA1. Polar residues predominate over residues 490–507 (NETQNPHKPSPSRLSTGA). 2 short sequence motifs (RPA1-binding motif) span residues 513-527 (WDNG…EATE) and 548-556 (EIPDELIIE).

Belongs to the eukaryotic-type primase small subunit family. As to quaternary structure, interacts with RPA1; leading to recruitment to chromatin and stimulate DNA primase activity. Interacts with SSBP1. Interacts with POLDIP2; leading to enhance DNA polymerase activity. Requires Mn(2+) as cofactor.

It localises to the nucleus. The protein resides in the mitochondrion matrix. It is found in the chromosome. It carries out the reaction ssDNA + n NTP = ssDNA/pppN(pN)n-1 hybrid + (n-1) diphosphate.. The catalysed reaction is DNA(n) + a 2'-deoxyribonucleoside 5'-triphosphate = DNA(n+1) + diphosphate. In terms of biological role, DNA primase and DNA polymerase required to tolerate replication-stalling lesions by bypassing them. Required to facilitate mitochondrial and nuclear replication fork progression by initiating de novo DNA synthesis using dNTPs and acting as an error-prone DNA polymerase able to bypass certain DNA lesions. Shows a high capacity to tolerate DNA damage lesions such as 8oxoG and abasic sites in DNA. Provides different translesion synthesis alternatives when DNA replication is stalled: able to synthesize DNA primers downstream of lesions, such as ultraviolet (UV) lesions, R-loops and G-quadruplexes, to allow DNA replication to continue. Can also realign primers ahead of 'unreadable lesions' such as abasic sites and 6-4 photoproduct (6-4 pyrimidine-pyrimidinone), thereby skipping the lesion. Repriming avoids fork degradation while leading to accumulation of internal ssDNA gaps behind the forks. Also able to incorporate nucleotides opposite DNA lesions such as 8oxoG, like a regular translesion synthesis DNA polymerase. Also required for reinitiating stalled forks after UV damage during nuclear DNA replication. Required for mitochondrial DNA (mtDNA) synthesis and replication, by reinitiating synthesis after UV damage or in the presence of chain-terminating nucleotides. Prevents APOBEC family-mediated DNA mutagenesis by repriming downstream of abasic site to prohibit error-prone translesion synthesis. Has non-overlapping function with POLH. In addition to its role in DNA damage response, also required to maintain efficient nuclear and mitochondrial DNA replication in unperturbed cells. The chain is DNA-directed primase/polymerase protein from Homo sapiens (Human).